The primary structure comprises 589 residues: Malto-oligosyltrehalose trehalohydrolase (589 aa).

Substrate is bound at residue 256–261 (GFDAVH). Catalysis depends on Asp258, which acts as the Nucleophile. The active-site Proton donor is the Glu295. Residues 320–324 (DDFHT) and 390–395 (HDQIGN) each bind substrate.

It belongs to the glycosyl hydrolase 13 family.

It localises to the cytoplasm. It carries out the reaction hydrolysis of (1-&gt;4)-alpha-D-glucosidic linkage in 4-alpha-D-[(1-&gt;4)-alpha-D-glucanosyl]n trehalose to yield trehalose and (1-&gt;4)-alpha-D-glucan.. It participates in glycan biosynthesis; trehalose biosynthesis. The polypeptide is Malto-oligosyltrehalose trehalohydrolase (treZ) (Brevibacterium helvolum).